The primary structure comprises 706 residues: Ribosomal RNA large subunit methyltransferase K/L (706 aa).

Residues 43 to 154 (LMYQSLLWSR…RDMASVALDL (112 aa)) form the THUMP domain.

This sequence belongs to the methyltransferase superfamily. RlmKL family.

Its subcellular location is the cytoplasm. The catalysed reaction is guanosine(2445) in 23S rRNA + S-adenosyl-L-methionine = N(2)-methylguanosine(2445) in 23S rRNA + S-adenosyl-L-homocysteine + H(+). The enzyme catalyses guanosine(2069) in 23S rRNA + S-adenosyl-L-methionine = N(2)-methylguanosine(2069) in 23S rRNA + S-adenosyl-L-homocysteine + H(+). Its function is as follows. Specifically methylates the guanine in position 2445 (m2G2445) and the guanine in position 2069 (m7G2069) of 23S rRNA. The sequence is that of Ribosomal RNA large subunit methyltransferase K/L from Yersinia pseudotuberculosis serotype O:1b (strain IP 31758).